Reading from the N-terminus, the 798-residue chain is Exo-1,4-beta-xylosidase xlnD (798 aa).

Residues 1–20 form the signal peptide; it reads MPGAASIVAVLAALLPTALG. N-linked (GlcNAc...) asparagine glycans are attached at residues N23, N87, N142, and N237. D310 is an active-site residue. N-linked (GlcNAc...) asparagine glycans are attached at residues N326, N391, N404, N443, N480, N522, N618, N645, N658, N685, and N707.

It belongs to the glycosyl hydrolase 3 family.

It localises to the secreted. The catalysed reaction is Hydrolysis of (1-&gt;4)-beta-D-xylans, to remove successive D-xylose residues from the non-reducing termini.. It functions in the pathway glycan degradation; xylan degradation. Xylan 1,4-beta-xylosidase involved in the hydrolysis of xylan, a major structural heterogeneous polysaccharide found in plant biomass representing the second most abundant polysaccharide in the biosphere, after cellulose. The protein is Exo-1,4-beta-xylosidase xlnD (xlnD) of Aspergillus oryzae (strain ATCC 42149 / RIB 40) (Yellow koji mold).